The chain runs to 137 residues: MLSPKRTKFRRHHRGRMKGKANRGNSIVYGDFGLQALEPGWIKSRQIESGRRVLTRYVRRNGKLWVCLFPDKPVTMRAAESRMGSGKGMPEYWVAVVKPGKILYELTGLTETVARKALRITGHKMPVKTQIVINKKF.

The interval 1-21 (MLSPKRTKFRRHHRGRMKGKA) is disordered.

This sequence belongs to the universal ribosomal protein uL16 family. Part of the 50S ribosomal subunit.

The protein localises to the plastid. Its subcellular location is the chloroplast. This chain is Large ribosomal subunit protein uL16c, found in Tupiella akineta (Green alga).